The following is a 500-amino-acid chain: Na(+)/H(+) antiporter NhaB (500 aa).

12 helical membrane-spanning segments follow: residues 28–50, 68–88, 98–118, 121–141, 145–165, 205–225, 244–264, 311–331, 350–370, 394–414, 449–469, and 477–497; these read FLLL…VLVG, GGLL…ALYA, LLLM…LLLF, LLLG…LAAL, FLDA…FFAV, LLMH…VGEP, QVAP…VLLE, VLIV…LLVI, FQEA…VAVI, MLFI…VATI, VATP…IAPL, and MVWM…WAVS.

It belongs to the NhaB Na(+)/H(+) (TC 2.A.34) antiporter family.

The protein resides in the cell inner membrane. The enzyme catalyses 2 Na(+)(in) + 3 H(+)(out) = 2 Na(+)(out) + 3 H(+)(in). Its function is as follows. Na(+)/H(+) antiporter that extrudes sodium in exchange for external protons. This is Na(+)/H(+) antiporter NhaB from Pseudomonas aeruginosa (strain UCBPP-PA14).